Here is a 247-residue protein sequence, read N- to C-terminus: PF03932 family protein CutC (247 aa).

It belongs to the CutC family.

It is found in the cytoplasm. This chain is PF03932 family protein CutC, found in Vibrio parahaemolyticus serotype O3:K6 (strain RIMD 2210633).